The chain runs to 114 residues: Vacuolar ATPase assembly integral membrane protein VMA21 (114 aa).

The Cytoplasmic segment spans residues 1–39; it reads MATRRIISQEKTLLEKDDSIGSSPAADEKSNIAPAVPTS. A helical transmembrane segment spans residues 40-60; sequence VIMKLLAFTLGMIVIPIGSYF. Over 61–73 the chain is Lumenal; that stretch reads ATVDSVFNGNSTY. The chain crosses the membrane as a helical span at residues 74-94; sequence AGALAAIMANVVLIGYIFVAM. The Cytoplasmic portion of the chain corresponds to 95–114; sequence AEDQSDQQEGGGPGDGKKDR. A Prevents secretion from ER motif is present at residues 111–114; sequence KKDR.

It belongs to the VMA21 family.

It is found in the endoplasmic reticulum membrane. It localises to the endoplasmic reticulum-Golgi intermediate compartment membrane. The protein resides in the cytoplasmic vesicle. Its subcellular location is the COPII-coated vesicle membrane. Required for the assembly of the V0 complex of the vacuolar ATPase (V-ATPase) in the endoplasmic reticulum. This is Vacuolar ATPase assembly integral membrane protein VMA21 from Chaetomium globosum (strain ATCC 6205 / CBS 148.51 / DSM 1962 / NBRC 6347 / NRRL 1970) (Soil fungus).